A 412-amino-acid polypeptide reads, in one-letter code: Multifunctional CCA protein (412 aa).

Positions 8 and 11 each coordinate ATP. Residues G8 and R11 each coordinate CTP. E21 and D23 together coordinate Mg(2+). ATP-binding residues include R91, R137, and R140. CTP-binding residues include R91, R137, and R140. The HD domain maps to 228-329 (CGIHTLMSLQ…WRLLQRLDVL (102 aa)).

Belongs to the tRNA nucleotidyltransferase/poly(A) polymerase family. Bacterial CCA-adding enzyme type 1 subfamily. Monomer. Can also form homodimers and oligomers. It depends on Mg(2+) as a cofactor. The cofactor is Ni(2+).

It catalyses the reaction a tRNA precursor + 2 CTP + ATP = a tRNA with a 3' CCA end + 3 diphosphate. The catalysed reaction is a tRNA with a 3' CCA end + 2 CTP + ATP = a tRNA with a 3' CCACCA end + 3 diphosphate. Functionally, catalyzes the addition and repair of the essential 3'-terminal CCA sequence in tRNAs without using a nucleic acid template. Adds these three nucleotides in the order of C, C, and A to the tRNA nucleotide-73, using CTP and ATP as substrates and producing inorganic pyrophosphate. tRNA 3'-terminal CCA addition is required both for tRNA processing and repair. Also involved in tRNA surveillance by mediating tandem CCA addition to generate a CCACCA at the 3' terminus of unstable tRNAs. While stable tRNAs receive only 3'-terminal CCA, unstable tRNAs are marked with CCACCA and rapidly degraded. In Acinetobacter baumannii (strain SDF), this protein is Multifunctional CCA protein.